A 306-amino-acid chain; its full sequence is Protein FdhE homolog (306 aa).

It belongs to the FdhE family.

It is found in the cytoplasm. Functionally, necessary for formate dehydrogenase activity. The protein is Protein FdhE homolog of Proteus mirabilis (strain HI4320).